The following is a 189-amino-acid chain: Putative L,D-transpeptidase in ATP synthase subunits region ORF 5 (189 aa).

Positions 1–35 (MTDTLNRRAAMALGLASAAGAALATPALSQDAAPA) form a signal peptide, tat-type signal. Residues 59–189 (PMLVADTFSR…CPVGTRVRVI (131 aa)) form the L,D-TPase catalytic domain. His-149 (proton donor/acceptor) is an active-site residue. Cys-165 (nucleophile) is an active-site residue.

The protein belongs to the YkuD family. In terms of processing, predicted to be exported by the Tat system. The position of the signal peptide cleavage has not been experimentally proven.

The protein operates within cell wall biogenesis; peptidoglycan biosynthesis. The polypeptide is Putative L,D-transpeptidase in ATP synthase subunits region ORF 5 (Fuscovulum blasticum (Rhodobacter blasticus)).